Here is a 601-residue protein sequence, read N- to C-terminus: ATP-dependent lipid A-core flippase (601 aa).

Residues 28–328 enclose the ABC transmembrane type-1 domain; sequence LLSVCGLIVY…LTRVNAEFQR (301 aa). A run of 6 helical transmembrane segments spans residues 32 to 52, 81 to 101, 160 to 180, 183 to 203, 267 to 287, and 296 to 316; these read CGLIVYGLVDAAFISFIGPFI, VLLMAPIVVILMFSLRGFANF, ALISIVRDGVTVIGMLGLMFY, WKLSLCILVIGPIMGLVITIV, AVSQPLIMVIGSFALAFVLYA, and DLTAGTFATILGAMMAMLQPI. Positions 360-597 constitute an ABC transporter domain; sequence LRFDNVSFSY…GGMYAKLYQM (238 aa). Residue 394–401 participates in ATP binding; the sequence is GRSGSGKS.

It belongs to the ABC transporter superfamily. Lipid exporter (TC 3.A.1.106) family. In terms of assembly, homodimer.

It is found in the cell inner membrane. The catalysed reaction is ATP + H2O + lipid A-core oligosaccharideSide 1 = ADP + phosphate + lipid A-core oligosaccharideSide 2.. Involved in lipopolysaccharide (LPS) biosynthesis. Translocates lipid A-core from the inner to the outer leaflet of the inner membrane. Transmembrane domains (TMD) form a pore in the inner membrane and the ATP-binding domain (NBD) is responsible for energy generation. In Shewanella sp. (strain MR-4), this protein is ATP-dependent lipid A-core flippase.